Reading from the N-terminus, the 252-residue chain is Transcriptional regulatory protein HptR (252 aa).

Residues 3 to 118 form the Response regulatory domain; that stretch reads KVVICDDERI…QLEVILGRLV (116 aa). D55 carries the post-translational modification 4-aspartylphosphate. The 98-residue stretch at 153 to 250 folds into the HTH araC/xylS-type domain; sequence NQIVDQIKQS…QMSPSDYCKQ (98 aa). 2 consecutive DNA-binding regions (H-T-H motif) follow at residues 170–191 and 217–240; these read SDLI…KDHV and HYEI…KKYL.

Phosphorylated by HptS.

It localises to the cytoplasm. Its function is as follows. Member of the two-component regulatory system HptS/HptR that regulates genes involved in hexose phosphate transport system in response to changes in extracellular phosphate sources. Activates uhpT expression to facilitate glucose-6-phosphate/G6P utilization by directly binding to its promoter. Antagonizes CcpA-dependent transcription of a subset of CcpA-regulated genes involved in antibiotic susceptibility. This Staphylococcus aureus (strain MRSA252) protein is Transcriptional regulatory protein HptR (hptR).